Here is a 162-residue protein sequence, read N- to C-terminus: Urease accessory protein UreE 1 (162 aa).

Residues 143-162 form a disordered region; the sequence is SGGHQHHHGHDHDHHHPDHE. Positions 152 to 162 are enriched in basic and acidic residues; that stretch reads HDHDHHHPDHE.

This sequence belongs to the UreE family.

It is found in the cytoplasm. Involved in urease metallocenter assembly. Binds nickel. Probably functions as a nickel donor during metallocenter assembly. The chain is Urease accessory protein UreE 1 from Brucella suis biovar 1 (strain 1330).